A 277-amino-acid chain; its full sequence is Deoxyguanosine kinase, mitochondrial (277 aa).

Residues 1–39 (MAAGRFLLRRLRASFRSPLRNALVDAPHARAMHDGGGPR) constitute a mitochondrion transit peptide. ATP is bound at residue 45-53 (GNIAVGKST). Positions 70, 100, 111, and 118 each coordinate substrate. E141 serves as the catalytic Proton acceptor. The substrate site is built by R142 and D147. 206–208 (RDR) contacts ATP. E211 is a binding site for substrate. 254-256 (EDF) provides a ligand contact to ATP.

This sequence belongs to the DCK/DGK family. In terms of assembly, homodimer. Spleen and thymus. Expressed at much lower levels in the brain and liver.

The protein resides in the mitochondrion. The protein localises to the cytoplasm. The catalysed reaction is 2'-deoxyguanosine + ATP = dGMP + ADP + H(+). It catalyses the reaction 2'-deoxyadenosine + ATP = dAMP + ADP + H(+). Its function is as follows. Phosphorylates deoxyguanosine and deoxyadenosine in the mitochondrial matrix, with the highest efficiency for deoxyguanosine. In non-replicating cells, where cytosolic dNTP synthesis is down-regulated, mtDNA synthesis depends solely on DGUOK and TK2. Phosphorylates certain nucleoside analogs. Widely used as target of antiviral and chemotherapeutic agents. The protein is Deoxyguanosine kinase, mitochondrial (Dguok) of Mus musculus (Mouse).